The sequence spans 291 residues: MGQKVHPYSLRVKINKDWKSKWYFDKKLYSTILHEDFLIRLEIMKFLKGIKFDISDIEIIRNNPQKVTVVIVTPRPGSVIGLKGSNLEKIGQLLTKKISKKISIKIKEVKRPELDAQIIANGIAKQVENRVSYRKVLKSALSTSMLKGAQGLKIKIAGRLGGAEIARSFEVKEGRVPLHTLRANIDYGFSEAHTTYGIIGVKVWLFKGEVLGRQTNSDAGQVINKKPFRERGETVKNFDKILNNREKINEKQTRALNKKDGLSKDEASLLNKLSSSFSKERVDSNEQNIGG.

The 72-residue stretch at 39 to 110 folds into the KH type-2 domain; that stretch reads IRLEIMKFLK…KISIKIKEVK (72 aa).

This sequence belongs to the universal ribosomal protein uS3 family. In terms of assembly, part of the 30S ribosomal subunit. Forms a tight complex with proteins S10 and S14.

In terms of biological role, binds the lower part of the 30S subunit head. Binds mRNA in the 70S ribosome, positioning it for translation. This is Small ribosomal subunit protein uS3 from Borreliella afzelii (strain PKo) (Borrelia afzelii).